We begin with the raw amino-acid sequence, 210 residues long: Thymidylate kinase (210 aa).

11-18 (GLEGAGKS) is a binding site for ATP.

The protein belongs to the thymidylate kinase family.

The enzyme catalyses dTMP + ATP = dTDP + ADP. Functionally, phosphorylation of dTMP to form dTDP in both de novo and salvage pathways of dTTP synthesis. In Histophilus somni (strain 129Pt) (Haemophilus somnus), this protein is Thymidylate kinase.